The following is a 473-amino-acid chain: JmjC domain-containing protein 4 (473 aa).

The 294-residue stretch at 140–433 (PTDGLLTDFS…DFDHPYLDRN (294 aa)) folds into the JmjC domain. The interval 452–473 (TNKKNEKRPAEDDSPSQKKTCQ) is disordered.

It localises to the nucleus. Its function is as follows. Has a role in meiosis. This Schizosaccharomyces pombe (strain 972 / ATCC 24843) (Fission yeast) protein is JmjC domain-containing protein 4 (jmj4).